A 1113-amino-acid polypeptide reads, in one-letter code: StAR-related lipid transfer protein 13 (1113 aa).

Met1 carries the N-acetylmethionine modification. Positions 55-122 constitute an SAM domain; that stretch reads QQEIEAKEAC…LNKCASMKLD (68 aa). 2 disordered regions span residues 162–254 and 307–346; these read LLPR…PTRA and PNGD…VSTP. Residues 177-188 are compositionally biased toward polar residues; it reads MRNTTSSESVLT. 2 stretches are compositionally biased toward low complexity: residues 197–213 and 326–344; these read SIHS…SQPG and SGKS…SGVS. Residue Ser411 is modified to Phosphoserine. Residues 536–549 show a composition bias toward polar residues; that stretch reads FEGNSVSEGRTTPS. Residues 536-580 are disordered; it reads FEGNSVSEGRTTPSDVERDVTSLNESEPPGVRDRRDSGVGASLTR. The 206-residue stretch at 663-868 folds into the Rho-GAP domain; it reads VPLIVHVQRT…HMIMECDRLF (206 aa). The START domain maps to 899-1107; the sequence is LEESGATFHT…RNSFQPLIAE (209 aa).

Homodimer. Interacts with TAX1BP1. Ubiquitously expressed. Underexpressed in hepatocellular carcinoma cells and some breast cancer cell lines.

Its subcellular location is the cytoplasm. It is found in the membrane. The protein localises to the mitochondrion membrane. It localises to the lipid droplet. GTPase-activating protein for RhoA, and perhaps for Cdc42. May be involved in regulation of cytoskeletal reorganization, cell proliferation and cell motility. Acts a tumor suppressor in hepatocellular carcinoma cells. This Homo sapiens (Human) protein is StAR-related lipid transfer protein 13 (STARD13).